A 440-amino-acid chain; its full sequence is Tryptophan synthase beta chain (440 aa).

Position 110 is an N6-(pyridoxal phosphate)lysine (lysine 110).

This sequence belongs to the TrpB family. Tetramer of two alpha and two beta chains. Pyridoxal 5'-phosphate is required as a cofactor.

The enzyme catalyses (1S,2R)-1-C-(indol-3-yl)glycerol 3-phosphate + L-serine = D-glyceraldehyde 3-phosphate + L-tryptophan + H2O. It participates in amino-acid biosynthesis; L-tryptophan biosynthesis; L-tryptophan from chorismate: step 5/5. The beta subunit is responsible for the synthesis of L-tryptophan from indole and L-serine. This is Tryptophan synthase beta chain from Thermococcus gammatolerans (strain DSM 15229 / JCM 11827 / EJ3).